Reading from the N-terminus, the 297-residue chain is Undecaprenyl-diphosphatase (297 aa).

7 helical membrane passes run Pro58 to Phe78, Ala103 to Ile123, Leu138 to Leu158, Leu168 to Val188, Ala208 to Leu228, Val243 to Leu263, and Phe274 to Leu294.

This sequence belongs to the UppP family.

The protein localises to the cell inner membrane. It carries out the reaction di-trans,octa-cis-undecaprenyl diphosphate + H2O = di-trans,octa-cis-undecaprenyl phosphate + phosphate + H(+). Its function is as follows. Catalyzes the dephosphorylation of undecaprenyl diphosphate (UPP). Confers resistance to bacitracin. This chain is Undecaprenyl-diphosphatase, found in Synechococcus sp. (strain ATCC 27144 / PCC 6301 / SAUG 1402/1) (Anacystis nidulans).